The primary structure comprises 199 residues: dITP/XTP pyrophosphatase (199 aa).

8-13 (SGNAGK) is a substrate binding site. The active-site Proton acceptor is aspartate 69. Mg(2+) is bound at residue aspartate 69. Substrate is bound by residues serine 70, 154–157 (FGYN), lysine 177, and 182–183 (HR).

It belongs to the HAM1 NTPase family. Homodimer. Mg(2+) serves as cofactor.

It carries out the reaction XTP + H2O = XMP + diphosphate + H(+). It catalyses the reaction dITP + H2O = dIMP + diphosphate + H(+). The catalysed reaction is ITP + H2O = IMP + diphosphate + H(+). Functionally, pyrophosphatase that catalyzes the hydrolysis of nucleoside triphosphates to their monophosphate derivatives, with a high preference for the non-canonical purine nucleotides XTP (xanthosine triphosphate), dITP (deoxyinosine triphosphate) and ITP. Seems to function as a house-cleaning enzyme that removes non-canonical purine nucleotides from the nucleotide pool, thus preventing their incorporation into DNA/RNA and avoiding chromosomal lesions. The protein is dITP/XTP pyrophosphatase of Xylella fastidiosa (strain Temecula1 / ATCC 700964).